We begin with the raw amino-acid sequence, 389 residues long: Urea transporter 1 (389 aa).

A run of 5 helical transmembrane segments spans residues 53-73 (PVVL…VFVN), 91-110 (WWAL…ALLL), 116-136 (LIAS…MAVF), 143-163 (FWWL…FSSA), and 173-193 (LPVF…ATGH). N-linked (GlcNAc...) asparagine glycosylation is present at Asn211. The next 4 helical transmembrane spans lie at 242–262 (GGIF…HAAI), 281–301 (IYFG…GGMF), 310–330 (LLAL…ANFM), and 333–353 (VGLP…LIMT).

The protein belongs to the urea transporter family. Homotrimer; each subunit contains a pore through which urea permeates. Identified in a complex with STOM. Detected in erythrocytes (at protein level). Expressed in spleen erythroblasts and tumoral kidney.

It is found in the cell membrane. The protein resides in the basolateral cell membrane. The catalysed reaction is urea(in) = urea(out). With respect to regulation, inhibited by phloretin and para-chloromercuribenzene sulfonate. In terms of biological role, mediates the transport of urea driven by a concentration gradient across the cell membrane of erythrocytes. Also mediates the transport of urea across the cell membrane of the renal inner medullary collecting duct which is critical to the urinary concentrating mechanism. Facilitates water transport in erythrocytes. This is Urea transporter 1 (SLC14A1) from Homo sapiens (Human).